Here is an 82-residue protein sequence, read N- to C-terminus: Hydrogenase maturation factor HybG (82 aa).

It belongs to the HupF/HypC family.

The protein operates within protein modification; [NiFe] hydrogenase maturation. Involved in the maturation of [NiFe] hydrogenases. Involved in the biosynthesis of the Fe(CN)(2)CO cofactor. HybG delivers iron-bound CO(2) to HypD where reduction to CO probably occurs. In complex with HypD, accepts the cyanide ligand generated by HypF and HypE, and also coordinates the carbon monoxide ligand. The sequence is that of Hydrogenase maturation factor HybG (hybG) from Escherichia coli O157:H7.